The following is a 640-amino-acid chain: Chaperone protein HtpG (640 aa).

Residues 1–343 (MQTAENIEHL…SSDLPLNVSR (343 aa)) are a; substrate-binding. Residues 344–564 (EILQESKDID…THDVSGNLGR (221 aa)) form a b region. The c stretch occupies residues 565–640 (LLKSAGQKVP…LLLQNILSGK (76 aa)).

The protein belongs to the heat shock protein 90 family. In terms of assembly, homodimer.

The protein resides in the cytoplasm. In terms of biological role, molecular chaperone. Has ATPase activity. This is Chaperone protein HtpG from Nitrosomonas europaea (strain ATCC 19718 / CIP 103999 / KCTC 2705 / NBRC 14298).